Reading from the N-terminus, the 356-residue chain is Ferrochelatase (356 aa).

2 residues coordinate Fe cation: histidine 214 and glutamate 295.

This sequence belongs to the ferrochelatase family.

It is found in the cytoplasm. The enzyme catalyses heme b + 2 H(+) = protoporphyrin IX + Fe(2+). It functions in the pathway porphyrin-containing compound metabolism; protoheme biosynthesis; protoheme from protoporphyrin-IX: step 1/1. In terms of biological role, catalyzes the ferrous insertion into protoporphyrin IX. This chain is Ferrochelatase, found in Paraburkholderia xenovorans (strain LB400).